We begin with the raw amino-acid sequence, 35 residues long: Small toxic polypeptide LdrD (35 aa).

A helical transmembrane segment spans residues 10-32 (FWHDLAAPVIAGILASMIVNWLN).

It belongs to the Ldr toxic peptide family.

The protein localises to the cell inner membrane. In terms of biological role, toxic component of a type I toxin-antitoxin (TA) system. Overexpression causes rapid cell killing and nucleoid condensation of the host cell. Overexpression induces stress-response and a number of membrane protein genes. May inhibit ATP synthesis due to its insertion in the cell inner membrane. This chain is Small toxic polypeptide LdrD (ldrD), found in Escherichia coli (strain K12).